Here is a 1146-residue protein sequence, read N- to C-terminus: MAQFGGQKNPPWATQFTATAVSQPAALGVQQPSLLGASPTIYTQQTALAAAGLTTQTPANYQLTQTAALQQQAAAVLQQQYSQPQQALYSVQQQLQQPQQTILTQPAVALPTSLSLSTPQPAAQITVSYPTPRSSQQQTQPQKQRVFTGVVTKLHDTFGFVDEDVFFQLGAVKGKTPQVGDRVLVEATYNPNMPFKWNAQRIQTLPNQNQSQTQPLLKTPTAVIQPIVPQTTFGVQAQPQPQSLLQAQISAASITPLLQTQPQPLLQQPQQKAGLLQPPVRIVSQPQPARRLDPPSRFSGRNDRGDQVPNRKDDRSRERDRERRRSRERSPQRKRSRERSPRRERERSPRRVRRVVPRYTVQFSKFSLDCPSCDMMELRRRYQNLYIPSDFFDAQFTWVDAFPLSRPFQLGNYCNFYVMHREVESLEKNMAVLDPPDADHLYSAKVMLMASPSMEDLYHKSCALAEDPQDLRDGFQHPARLVKFLVGMKGKDEAMAIGGHWSPSLDGPNPEKDPSVLIKTAIRCCKALTGIDLSVCTQWYRFAEIRYHRPEETHKGRTVPAHVETVVLFFPDVWHCLPTRSEWETLSRGYKQQLVEKLQGERKKADGEQDEEEKDDGEVKEIATPTHWSKLDPKAMKVNDLRKELESRALSSKGLKSQLIARLTKQLKIEEQKEEQKELEKSEKEEEDEDDKKSEDDKEEEERKRQEEVERQRQERRYILPDEPAIIVHPNWAAKSGKFDCSIMSLSVLLDYRLEDNKEHSFEVSLFAELFNEMLQRDFGVRIYKSLLSLPEKEDKKDKEKKSKKEERKDKKEEREDDIDEPKPKRRKSGDDKDKKEDRDERKKEEKRKDDSKDDDETEEDNNQDEYDPMEAEEAEDEDDDREEEEVKRDDKRDVSRYCKDRPAKDKEKEKPQMVTVNRDLLMAFVYFDQSHCGYLLEKDLEEILYTLGLHLSRAQVKKLLNKVVLRESCFYRKLTDTSKDDENHEESEALQEDMLGNRLLLPTPTIKQESKDGEENVGLIVYNGAMVDVGSLLQKLEKSEKVRAEVEQKLQLLEEKTDEDGKTILNLENSNKSLSGELREVKKDLGQLQENLEVSENMNLQFENQLNKTLRNLSTVMDDIHTVLKKDNVKSEDRDEKSKENGSGV.

An interaction with AR region spans residues 1–246 (MAQFGGQKNP…AQPQPQSLLQ (246 aa)). Residues 200 to 657 (QRIQTLPNQN…RALSSKGLKS (458 aa)) form an interaction with GATA2 region. The disordered stretch occupies residues 282-351 (IVSQPQPARR…RRERERSPRR (70 aa)). Basic and acidic residues-rich tracts occupy residues 290 to 331 (RRLD…ERSP) and 338 to 349 (ERSPRRERERSP). Serine 453 carries the phosphoserine modification. Positions 591 to 615 (KQQLVEKLQGERKKADGEQDEEEKD) form a coiled coil. Residues 599–635 (QGERKKADGEQDEEEKDDGEVKEIATPTHWSKLDPKA) form a disordered region. The segment covering 608–618 (EQDEEEKDDGE) has biased composition (acidic residues). Position 624 is a phosphothreonine (threonine 624). The 35-residue stretch at 633–667 (PKAMKVNDLRKELESRALSSKGLKSQLIARLTKQL) folds into the SAP domain. Lysine 634 participates in a covalent cross-link: Glycyl lysine isopeptide (Lys-Gly) (interchain with G-Cter in ubiquitin). Positions 640–1146 (DLRKELESRA…EKSKENGSGV (507 aa)) are interaction with GATA1. Threonine 664 bears the Phosphothreonine mark. 4 stretches are compositionally biased toward basic and acidic residues: residues 671–684 (EQKE…KSEK), 691–716 (DKKS…RQER), 793–814 (KEDK…KKEE), and 829–852 (SGDD…KDDS). Disordered regions lie at residues 671 to 716 (EQKE…RQER) and 793 to 912 (KEDK…KEKP). 2 positions are modified to phosphoserine: serine 682 and serine 694. Residues 853-884 (KDDDETEEDNNQDEYDPMEAEEAEDEDDDREE) show a composition bias toward acidic residues. Threonine 858 bears the Phosphothreonine mark. Over residues 885-912 (EEVKRDDKRDVSRYCKDRPAKDKEKEKP) the composition is skewed to basic and acidic residues. Lysine 1008 participates in a covalent cross-link: Glycyl lysine isopeptide (Lys-Gly) (interchain with G-Cter in SUMO1); alternate. Lysine 1008 participates in a covalent cross-link: Glycyl lysine isopeptide (Lys-Gly) (interchain with G-Cter in SUMO2); alternate. Residues 1029-1110 (DVGSLLQKLE…LQFENQLNKT (82 aa)) adopt a coiled-coil conformation. Residues lysine 1063 and lysine 1131 each participate in a glycyl lysine isopeptide (Lys-Gly) (interchain with G-Cter in SUMO2) cross-link.

Directly interacts with ESR1, NR3C1 and p53/TP53. Interacts (via N-terminus) with CALCOCO1. Interacts with MED1 and GATA1. Interacts with AR and GATA2.

It localises to the cytoplasm. Its subcellular location is the perinuclear region. In terms of biological role, associates with components of the Mediator and p160 coactivator complexes that play a role as intermediaries transducing regulatory signals from upstream transcriptional activator proteins to basal transcription machinery at the core promoter. Recruited to endogenous nuclear receptor target genes in response to the appropriate hormone. Also functions as a p53 coactivator. May thus play an important role in transcriptional regulation. May be involved in apoptosis signaling in the presence of the retinoid CD437. Apoptosis induction involves sequestration of 14-3-3 protein(s) and mediated altered expression of multiple cell cycle regulatory genes including MYC, CCNB1 and CDKN1A. Plays a role in cell cycle progression and/or cell proliferation. In association with CALCOCO1 enhances GATA1- and MED1-mediated transcriptional activation from the gamma-globin promoter during erythroid differentiation of K562 erythroleukemia cells. Can act as a both a coactivator and corepressor of AR-mediated transcription. Contributes to chromatin looping and AR transcription complex assembly by stabilizing AR-GATA2 association on chromatin and facilitating MED1 and RNA polymerase II recruitment to AR-binding sites. May play an important role in the growth and tumorigenesis of prostate cancer cells. This Mus musculus (Mouse) protein is Cell division cycle and apoptosis regulator protein 1 (Ccar1).